Here is a 765-residue protein sequence, read N- to C-terminus: Glucosamine inositolphosphorylceramide transferase 1 (765 aa).

Transmembrane regions (helical) follow at residues 43–63, 394–414, and 476–496; these read FFASCFGFYAFVAATYAWFVF, VILGYASLAAAISVVILLGFL, and MGKFTLGVIVILGLLLTCVGV. Residues N553, 577–582, 598–600, R628, and 683–687 contribute to the substrate site; these read NSLNNR, DDD, and FNCED. D600 is a binding site for Mn(2+). A disulfide bridge connects residues C685 and C738. The active site involves D687.

Belongs to the glycosyltransferase 64 family. It depends on Mn(2+) as a cofactor. Specifically and highly expressed in developing embryos and mature seeds. Also detected at low levels in stigma and pollen.

It is found in the membrane. The catalysed reaction is an N-(2R-hydroxy-very-long-chain fatty acyl)-(R)-4-hydroxysphingoid base + a 1,2-diacyl-sn-glycero-3-phospho-(1D-myo-inositol) = a 1D-myo-inositol-1-phospho-N-[(R)-2-hydroxy-very-long-chain fatty acyl]-(R)-4-hydroxysphingoid base + a 1,2-diacyl-sn-glycerol. Its pathway is sphingolipid metabolism. Functionally, glycosyltransferase that mediates the glycosylation of glycosylinositol phosphorylceramides (GIPCs), the major sphingolipids in the plasma membrane; acts as a HexN(Ac)-specific GIPC sugar transferase and accepts glucosamine (GlcN) and N-acetylglucosamine (GlcNAc) as the sugar unit. Responsible for the glycosylation of a subgroup of GIPCs found in seeds and pollen that contain GlcNAc and GlcN (GlcN(Ac)). Maybe involved in the maintenance of cell-cell adhesion. This is Glucosamine inositolphosphorylceramide transferase 1 from Arabidopsis thaliana (Mouse-ear cress).